Here is a 520-residue protein sequence, read N- to C-terminus: GMP synthase [glutamine-hydrolyzing] (520 aa).

The Glutamine amidotransferase type-1 domain maps to 13-205 (KIIVLDYGSQ…ALNICKAKGD (193 aa)). The active-site Nucleophile is C90. Active-site residues include H179 and E181. One can recognise a GMPS ATP-PPase domain in the interval 206–395 (WSMDNFIDMQ…LGMPDHIVWR (190 aa)). Position 233-239 (233-239 (SGGVDSS)) interacts with ATP.

In terms of assembly, homodimer.

It carries out the reaction XMP + L-glutamine + ATP + H2O = GMP + L-glutamate + AMP + diphosphate + 2 H(+). Its pathway is purine metabolism; GMP biosynthesis; GMP from XMP (L-Gln route): step 1/1. Catalyzes the synthesis of GMP from XMP. The protein is GMP synthase [glutamine-hydrolyzing] of Streptococcus pneumoniae (strain P1031).